Consider the following 493-residue polypeptide: Cobyric acid synthase (493 aa).

The GATase cobBQ-type domain maps to 246–440 (PIDIAVIKMP…IHGVFDGVVF (195 aa)). Cysteine 326 functions as the Nucleophile in the catalytic mechanism. Residue histidine 432 is part of the active site.

This sequence belongs to the CobB/CobQ family. CobQ subfamily.

Its pathway is cofactor biosynthesis; adenosylcobalamin biosynthesis. Catalyzes amidations at positions B, D, E, and G on adenosylcobyrinic A,C-diamide. NH(2) groups are provided by glutamine, and one molecule of ATP is hydrogenolyzed for each amidation. The protein is Cobyric acid synthase of Clostridium botulinum (strain ATCC 19397 / Type A).